The chain runs to 376 residues: Chaperone protein DnaJ (376 aa).

The J domain occupies 5–70 (DFYEVLGVGR…DKKAAYDQFG (66 aa)). The CR-type zinc finger occupies 132–210 (GLSKELRIPT…CHGEGRVEKS (79 aa)). Residues C145, C148, C162, C165, C184, C187, C198, and C201 each contribute to the Zn(2+) site. 4 CXXCXGXG motif repeats span residues 145–152 (CEPCDGSG), 162–169 (CGTCHGQG), 184–191 (CPTCHGRG), and 198–205 (CNKCHGEG).

It belongs to the DnaJ family. In terms of assembly, homodimer. Zn(2+) serves as cofactor.

The protein localises to the cytoplasm. Its function is as follows. Participates actively in the response to hyperosmotic and heat shock by preventing the aggregation of stress-denatured proteins and by disaggregating proteins, also in an autonomous, DnaK-independent fashion. Unfolded proteins bind initially to DnaJ; upon interaction with the DnaJ-bound protein, DnaK hydrolyzes its bound ATP, resulting in the formation of a stable complex. GrpE releases ADP from DnaK; ATP binding to DnaK triggers the release of the substrate protein, thus completing the reaction cycle. Several rounds of ATP-dependent interactions between DnaJ, DnaK and GrpE are required for fully efficient folding. Also involved, together with DnaK and GrpE, in the DNA replication of plasmids through activation of initiation proteins. This chain is Chaperone protein DnaJ, found in Shewanella piezotolerans (strain WP3 / JCM 13877).